A 316-amino-acid chain; its full sequence is MNQNTQPTNNLKDKKITYNFNKLQKRLRRNVGNAIANFNMIEAGDKVMVCLSGGKDSYTLLDILLNLKLSAPINFDIVAVNLDQKQPGFPEHILPEYLASIGVEYKIVQENTYGIVKEKIPEGKTTCSLCSRLRRGILYRTATELGATKIALGHHRDDMLETLFLNMFYNGKLKSMPPKLISDDAKHIVIRPLAYCKEKDIEKYAEAKQFPIIPCNLCGSQPNLQRQVVKEMLQNWDRQYPGRIETMFSALQNVTPSHLCDTQLFNFKAVKHGEMINGIEGDIAFDKMDIPMTLNIQEEDEKQAYTQNGTIQFKAV.

The short motif at 52–57 is the PP-loop motif element; sequence SGGKDS. 3 residues coordinate [4Fe-4S] cluster: C127, C130, and C218.

It belongs to the TtcA family. As to quaternary structure, homodimer. Requires Mg(2+) as cofactor. The cofactor is [4Fe-4S] cluster.

It localises to the cytoplasm. It carries out the reaction cytidine(32) in tRNA + S-sulfanyl-L-cysteinyl-[cysteine desulfurase] + AH2 + ATP = 2-thiocytidine(32) in tRNA + L-cysteinyl-[cysteine desulfurase] + A + AMP + diphosphate + H(+). It functions in the pathway tRNA modification. Catalyzes the ATP-dependent 2-thiolation of cytidine in position 32 of tRNA, to form 2-thiocytidine (s(2)C32). The sulfur atoms are provided by the cysteine/cysteine desulfurase (IscS) system. The polypeptide is tRNA-cytidine(32) 2-sulfurtransferase (Haemophilus ducreyi (strain 35000HP / ATCC 700724)).